Here is a 184-residue protein sequence, read N- to C-terminus: ATP synthase subunit b, chloroplastic (184 aa).

Residues 27–49 (LATNPINLSVVLGVLIFFGKGVL) form a helical membrane-spanning segment.

It belongs to the ATPase B chain family. F-type ATPases have 2 components, F(1) - the catalytic core - and F(0) - the membrane proton channel. F(1) has five subunits: alpha(3), beta(3), gamma(1), delta(1), epsilon(1). F(0) has four main subunits: a(1), b(1), b'(1) and c(10-14). The alpha and beta chains form an alternating ring which encloses part of the gamma chain. F(1) is attached to F(0) by a central stalk formed by the gamma and epsilon chains, while a peripheral stalk is formed by the delta, b and b' chains.

It localises to the plastid. The protein localises to the chloroplast thylakoid membrane. F(1)F(0) ATP synthase produces ATP from ADP in the presence of a proton or sodium gradient. F-type ATPases consist of two structural domains, F(1) containing the extramembraneous catalytic core and F(0) containing the membrane proton channel, linked together by a central stalk and a peripheral stalk. During catalysis, ATP synthesis in the catalytic domain of F(1) is coupled via a rotary mechanism of the central stalk subunits to proton translocation. In terms of biological role, component of the F(0) channel, it forms part of the peripheral stalk, linking F(1) to F(0). This chain is ATP synthase subunit b, chloroplastic, found in Cucumis sativus (Cucumber).